The sequence spans 176 residues: 3-hydroxydecanoyl-[acyl-carrier-protein] dehydratase (176 aa).

Histidine 75 is a catalytic residue.

This sequence belongs to the thioester dehydratase family. FabA subfamily. In terms of assembly, homodimer.

The protein resides in the cytoplasm. The catalysed reaction is a (3R)-hydroxyacyl-[ACP] = a (2E)-enoyl-[ACP] + H2O. The enzyme catalyses (3R)-hydroxydecanoyl-[ACP] = (2E)-decenoyl-[ACP] + H2O. It carries out the reaction (2E)-decenoyl-[ACP] = (3Z)-decenoyl-[ACP]. Its pathway is lipid metabolism; fatty acid biosynthesis. In terms of biological role, necessary for the introduction of cis unsaturation into fatty acids. Catalyzes the dehydration of (3R)-3-hydroxydecanoyl-ACP to E-(2)-decenoyl-ACP and then its isomerization to Z-(3)-decenoyl-ACP. Can catalyze the dehydratase reaction for beta-hydroxyacyl-ACPs with saturated chain lengths up to 16:0, being most active on intermediate chain length. In Haemophilus ducreyi (strain 35000HP / ATCC 700724), this protein is 3-hydroxydecanoyl-[acyl-carrier-protein] dehydratase.